The sequence spans 518 residues: Bifunctional methyltransferase (518 aa).

The interval 1-300 (MQYSIKQILN…SHNRVIEISP (300 aa)) is hemK. The tract at residues 1-302 (MQYSIKQILN…NRVIEISPIN (302 aa)) is RF MTase. S-adenosyl-L-methionine contacts are provided by residues 140-144 (GTGSG), Asp163, Trp192, Asn207, Glu347, Glu372, Asn399, and Asp421. 207 to 210 (NPPY) contacts substrate. Positions 301–518 (INLNRSYARR…MILQHALTGH (218 aa)) are tRNA (guanine-N(7)-)-methyltransferase. Residues 305-518 (RSYARRIGKS…MILQHALTGH (214 aa)) are tRNA MTase. Residue Asp421 is part of the active site. Residues Lys425 and Asp457 each contribute to the substrate site.

In the C-terminal section; belongs to the class I-like SAM-binding methyltransferase superfamily. TrmB family. It in the N-terminal section; belongs to the protein N5-glutamine methyltransferase family. PrmC subfamily.

It carries out the reaction L-glutaminyl-[peptide chain release factor] + S-adenosyl-L-methionine = N(5)-methyl-L-glutaminyl-[peptide chain release factor] + S-adenosyl-L-homocysteine + H(+). It catalyses the reaction guanosine(46) in tRNA + S-adenosyl-L-methionine = N(7)-methylguanosine(46) in tRNA + S-adenosyl-L-homocysteine. Functionally, methylates the class 1 translation termination release factors RF1/PrfA and RF2/PrfB on the glutamine residue of the universally conserved GGQ motif. In terms of biological role, catalyzes the formation of N(7)-methylguanine at position 46 (m7G46) in tRNA. In Rickettsia typhi (strain ATCC VR-144 / Wilmington), this protein is Bifunctional methyltransferase (prmC/trmB).